A 168-amino-acid polypeptide reads, in one-letter code: Urease accessory protein UreE (168 aa).

Residues 145–168 are disordered; that stretch reads EGGAYAAGQGGGHGPHGQHTHPHH.

The protein belongs to the UreE family.

It is found in the cytoplasm. Functionally, involved in urease metallocenter assembly. Binds nickel. Probably functions as a nickel donor during metallocenter assembly. In Verminephrobacter eiseniae (strain EF01-2), this protein is Urease accessory protein UreE.